Consider the following 316-residue polypeptide: Transaldolase (316 aa).

The active-site Schiff-base intermediate with substrate is lysine 132.

It belongs to the transaldolase family. Type 1 subfamily. As to quaternary structure, homodimer.

It is found in the cytoplasm. The catalysed reaction is D-sedoheptulose 7-phosphate + D-glyceraldehyde 3-phosphate = D-erythrose 4-phosphate + beta-D-fructose 6-phosphate. The protein operates within carbohydrate degradation; pentose phosphate pathway; D-glyceraldehyde 3-phosphate and beta-D-fructose 6-phosphate from D-ribose 5-phosphate and D-xylulose 5-phosphate (non-oxidative stage): step 2/3. Transaldolase is important for the balance of metabolites in the pentose-phosphate pathway. In Vibrio vulnificus (strain YJ016), this protein is Transaldolase.